A 196-amino-acid polypeptide reads, in one-letter code: Imidazoleglycerol-phosphate dehydratase (196 aa).

This sequence belongs to the imidazoleglycerol-phosphate dehydratase family.

It localises to the cytoplasm. It carries out the reaction D-erythro-1-(imidazol-4-yl)glycerol 3-phosphate = 3-(imidazol-4-yl)-2-oxopropyl phosphate + H2O. Its pathway is amino-acid biosynthesis; L-histidine biosynthesis; L-histidine from 5-phospho-alpha-D-ribose 1-diphosphate: step 6/9. The polypeptide is Imidazoleglycerol-phosphate dehydratase (Clostridium botulinum (strain Langeland / NCTC 10281 / Type F)).